The chain runs to 258 residues: 5'-nucleotidase SurE (258 aa).

A divalent metal cation is bound by residues Asp10, Asp11, Ser41, and Asn96.

It belongs to the SurE nucleotidase family. Requires a divalent metal cation as cofactor.

The protein resides in the cytoplasm. It carries out the reaction a ribonucleoside 5'-phosphate + H2O = a ribonucleoside + phosphate. Functionally, nucleotidase that shows phosphatase activity on nucleoside 5'-monophosphates. In Sorangium cellulosum (strain So ce56) (Polyangium cellulosum (strain So ce56)), this protein is 5'-nucleotidase SurE.